Here is a 122-residue protein sequence, read N- to C-terminus: Large ribosomal subunit protein uL14 (122 aa).

The protein belongs to the universal ribosomal protein uL14 family. In terms of assembly, part of the 50S ribosomal subunit. Forms a cluster with proteins L3 and L19. In the 70S ribosome, L14 and L19 interact and together make contacts with the 16S rRNA in bridges B5 and B8.

In terms of biological role, binds to 23S rRNA. Forms part of two intersubunit bridges in the 70S ribosome. In Paraburkholderia phymatum (strain DSM 17167 / CIP 108236 / LMG 21445 / STM815) (Burkholderia phymatum), this protein is Large ribosomal subunit protein uL14.